The primary structure comprises 474 residues: MTKKLHIKTWGCQMNEYDSSKMADLLNATHGYELTELAEEADVLLLNTCSIREKAQEKVFHLLGRWKLLKKKNPDLIIGVGGCVASQEGKLIRTRSPYVDIVFGPQTLHRLPEMINSVRGDRSPVVDVSFPEIEKFDRLPEPRADGPSAFVSIMEGCNKYCTYCVVPYTRGEEVSRPCDDILFEVAQLAAQGVREVNLLGQNVNAWRGENYDGSIGTFAELLRLVAAIDGIDRVRFTTSHPIEFTDDIIDVYRDTPELVSFLHLPVQCGSDRVLNLMGRTHTVLEYKAIIRKLREARPDIQISSDFIVGFPGETTDDFERTMKLIGEINFDVSFSFIFSARPGTPAADMVDDVPEEEKKQRLYILQERINQQVTAWSRRMLGTTQRILVEGTSRKSVMQLSGRTENNRVVNFEGTPDMIGKFVDIEILEVLTNSMRGKVVRTEDQMGLRVAETPASVIARTRKENDSGAVVYQP.

Residues 3–120 enclose the MTTase N-terminal domain; the sequence is KKLHIKTWGC…LPEMINSVRG (118 aa). 6 residues coordinate [4Fe-4S] cluster: C12, C49, C83, C157, C161, and C164. Positions 143-378 constitute a Radical SAM core domain; the sequence is RADGPSAFVS…INQQVTAWSR (236 aa). Residues 378–441 enclose the TRAM domain; sequence RRMLGTTQRI…TNSMRGKVVR (64 aa).

This sequence belongs to the methylthiotransferase family. MiaB subfamily. In terms of assembly, monomer. Requires [4Fe-4S] cluster as cofactor.

Its subcellular location is the cytoplasm. The catalysed reaction is N(6)-dimethylallyladenosine(37) in tRNA + (sulfur carrier)-SH + AH2 + 2 S-adenosyl-L-methionine = 2-methylsulfanyl-N(6)-dimethylallyladenosine(37) in tRNA + (sulfur carrier)-H + 5'-deoxyadenosine + L-methionine + A + S-adenosyl-L-homocysteine + 2 H(+). In terms of biological role, catalyzes the methylthiolation of N6-(dimethylallyl)adenosine (i(6)A), leading to the formation of 2-methylthio-N6-(dimethylallyl)adenosine (ms(2)i(6)A) at position 37 in tRNAs that read codons beginning with uridine. In Enterobacter sp. (strain 638), this protein is tRNA-2-methylthio-N(6)-dimethylallyladenosine synthase.